The following is a 556-amino-acid chain: 2,3-bisphosphoglycerate-independent phosphoglycerate mutase (556 aa).

Residues Asp-25 and Ser-78 each coordinate Mn(2+). The active-site Phosphoserine intermediate is Ser-78. Residues His-137, 167-168 (RD), Arg-203, Arg-210, 283-286 (RADR), and Lys-358 contribute to the substrate site. 5 residues coordinate Mn(2+): Asp-427, His-431, Asp-468, His-469, and His-498.

Belongs to the BPG-independent phosphoglycerate mutase family. In terms of assembly, monomer. It depends on Mn(2+) as a cofactor. Found ubiquitously in germinating seed.

The protein localises to the cytoplasm. The enzyme catalyses (2R)-2-phosphoglycerate = (2R)-3-phosphoglycerate. Its pathway is carbohydrate degradation; glycolysis; pyruvate from D-glyceraldehyde 3-phosphate: step 3/5. Catalyzes the interconversion of 2-phosphoglycerate and 3-phosphoglycerate. This Ricinus communis (Castor bean) protein is 2,3-bisphosphoglycerate-independent phosphoglycerate mutase.